The primary structure comprises 98 residues: MMKFVLFGMIVILFSLMGSIRGDDDPGNYPTNAYGNKYYCTILGENEYCRKICKLHGVTYGYCYNSRCWCEKLEDKDVTIWNAVKNHCTNTILYPNGK.

An N-terminal signal peptide occupies residues 1 to 22; the sequence is MMKFVLFGMIVILFSLMGSIRG. The 64-residue stretch at 26–89 folds into the LCN-type CS-alpha/beta domain; that stretch reads PGNYPTNAYG…IWNAVKNHCT (64 aa). Cystine bridges form between cysteine 40–cysteine 63, cysteine 49–cysteine 68, and cysteine 53–cysteine 70. Position 96 is an asparagine amide (asparagine 96).

This sequence belongs to the long (3 C-C) scorpion toxin superfamily. Monomer (edited version) and heterodimer (non-edited version) of this alpha chain and a beta chain (AC Q95P90). Expressed by the venom gland.

It is found in the secreted. Its function is as follows. The heterodimer non-edited LVP1 induces lipolysis in rat adipocytes. Induction of lipolysis by LVP1 appears to be mediated through the beta-2 adrenergic receptor pathway (ADRB2). The edited BmKBTx, similar to beta-toxins, may modulate voltage-gated sodium channels (Nav) and may block voltage-gated potassium channels (Kv). Seems to be a rare component in the venom. The chain is Lipolysis-activating peptide 1-alpha chain (LVP1a) from Olivierus martensii (Manchurian scorpion).